The following is a 98-amino-acid chain: N(2)-fixation sustaining protein CowN (98 aa).

It belongs to the CowN family.

Its function is as follows. Is required to sustain N(2)-dependent growth in the presence of low levels of carbon monoxide (CO). Probably acts by protecting the N(2) fixation ability of the nitrogenase complex, which is inactivated in the presence of CO. In Dechloromonas aromatica (strain RCB), this protein is N(2)-fixation sustaining protein CowN.